The following is a 728-amino-acid chain: Diacylglycerol kinase 1 (728 aa).

A helical transmembrane segment spans residues 27–48 (GLMFSCFVAALVGILTIAYTAF). Phorbol-ester/DAG-type zinc fingers lie at residues 79-137 (PHSW…PKDC) and 149-212 (VHQW…GDIC). Disordered stretches follow at residues 265 to 296 (KQTNETSADTGNSGSNCDESTESTADTGPTVN) and 308 to 336 (VMNGDSSNGDSDSNGKLEKKPSVKRTGSF). Over residues 267 to 294 (TNETSADTGNSGSNCDESTESTADTGPT) the composition is skewed to polar residues. The span at 310-319 (NGDSSNGDSD) shows a compositional bias: low complexity. The DAGKc domain maps to 357–496 (SDARPLLVFI…LDRWKVSILN (140 aa)). Residues Lys491 and Lys500 each participate in a glycyl lysine isopeptide (Lys-Gly) (interchain with G-Cter in ubiquitin) cross-link.

It belongs to the eukaryotic diacylglycerol kinase family. As to quaternary structure, monomer. Expressed in roots, shoots, and leaves.

It is found in the membrane. The catalysed reaction is a 1,2-diacyl-sn-glycerol + ATP = a 1,2-diacyl-sn-glycero-3-phosphate + ADP + H(+). Phosphorylates the second messenger diacylglycerol (DAG) to generate phosphatidic acid (PA), another important signaling molecule. PA is required for plant development and responses to abiotic stress and pathogen attack. May be involved in the accumulation of PA during cold stress. This Arabidopsis thaliana (Mouse-ear cress) protein is Diacylglycerol kinase 1 (DGK1).